Consider the following 501-residue polypeptide: 4,4'-diapophytoene desaturase (4,4'-diaponeurosporene-forming) (501 aa).

An FAD-binding site is contributed by 5–17 (VVGAGVTGLAAAA).

This sequence belongs to the carotenoid/retinoid oxidoreductase family. CrtN subfamily.

The catalysed reaction is 15-cis-4,4'-diapophytoene + 3 FAD + 3 H(+) = all-trans-4,4'-diaponeurosporene + 3 FADH2. The protein operates within carotenoid biosynthesis; staphyloxanthin biosynthesis; staphyloxanthin from farnesyl diphosphate: step 2/5. In terms of biological role, involved in the biosynthesis of the yellow-orange carotenoid staphyloxanthin, which plays a role in the virulence via its protective function against oxidative stress. Catalyzes three successive dehydrogenation reactions that lead to the introduction of three double bonds into 4,4'-diapophytoene (dehydrosqualene), with 4,4'-diapophytofluene and 4,4'-diapo-zeta-carotene as intermediates, and 4,4'-diaponeurosporene (the major deep-yellow pigment in staphylococci strains) as the end product. The polypeptide is 4,4'-diapophytoene desaturase (4,4'-diaponeurosporene-forming) (Staphylococcus haemolyticus (strain JCSC1435)).